A 121-amino-acid chain; its full sequence is Putative membrane protein insertion efficiency factor (121 aa).

The protein belongs to the UPF0161 family.

The protein localises to the cell membrane. In terms of biological role, could be involved in insertion of integral membrane proteins into the membrane. The polypeptide is Putative membrane protein insertion efficiency factor (Rhodococcus opacus (strain B4)).